Consider the following 423-residue polypeptide: MKMPLTWGSWFLLSAWILNAGAEISITPEPAQPAEGDNVTLVVHGLSGELLAYNWYAGPSISLTFLVASYIVSTGDETPGPAHTGREAVRPDGSLDIHGALPGHTGTYILQTLNRQFQTEVGYGHMQVYEILAPPTVMANDTALVERRDTLRLICSSPSPAEVRWFFNGDALPVAVRLGLSPDGRMLTRHGVRREEAGAYQCEVWNPVSVSRSEPLNLTVYFGPERVAILQDSTTRTGCTIKVDFNTSLTLWCVSRSCPEPEYVWAFNGKALKNGQDHLNISSMSADHEGTYTCIAKNSKTLLSGSASVVVKLSAAAVAMMIVPVPTKPMEGQDVTLTVQGYPKDLLVYAWYRGPASEPNRLLSQLPSGNWIAGPAHTGREVGFANCSLLVQKLNLTDAGRYTLKTVTLQGKTDTLEVELQVA.

Positions 1-22 are cleaved as a signal peptide; it reads MKMPLTWGSWFLLSAWILNAGA. Asn38 carries an N-linked (GlcNAc...) asparagine glycan. The segment at 77 to 96 is disordered; that stretch reads ETPGPAHTGREAVRPDGSLD. The segment covering 84–95 has biased composition (basic and acidic residues); the sequence is TGREAVRPDGSL. Ig-like C2-type domains lie at 134–219 and 224–310; these read PPTV…LNLT and PERV…ASVV. Cys155 and Cys202 are joined by a disulfide. Asn217 is a glycosylation site (N-linked (GlcNAc...) asparagine). Cys253 and Cys294 are disulfide-bonded.

The protein belongs to the immunoglobulin superfamily. CEA family. In terms of assembly, homooligomer; can for homodimers and homotetramers. Interacts with TECTA and TECTB.

Its subcellular location is the secreted. Required for proper hearing, plays a role in maintaining the integrity of the tectorial membrane. This Rattus norvegicus (Rat) protein is Cell adhesion molecule CEACAM16.